Consider the following 369-residue polypeptide: Probable peptidoglycan glycosyltransferase FtsW (369 aa).

8 helical membrane passes run 11-31, 48-68, 77-97, 134-151, 154-174, 177-197, 265-285, and 306-326; these read LLSVTIILLIFSIIMVGSSSV, NFIHSIISILCMIFVFNVPIY, LILCSIILLLTLNYFGISNHG, TSTIQLISIILIVSKLLL, PDFGTLVILYSSLLFMLFLIG, FLFLSASSAIFTTIVLSLIYF, LGYLGIAMIVISLFFIFFQGM, and ISLLIIIQSIINIGSSIGILP.

The protein belongs to the SEDS family. FtsW subfamily.

The protein resides in the cell inner membrane. It catalyses the reaction [GlcNAc-(1-&gt;4)-Mur2Ac(oyl-L-Ala-gamma-D-Glu-L-Lys-D-Ala-D-Ala)](n)-di-trans,octa-cis-undecaprenyl diphosphate + beta-D-GlcNAc-(1-&gt;4)-Mur2Ac(oyl-L-Ala-gamma-D-Glu-L-Lys-D-Ala-D-Ala)-di-trans,octa-cis-undecaprenyl diphosphate = [GlcNAc-(1-&gt;4)-Mur2Ac(oyl-L-Ala-gamma-D-Glu-L-Lys-D-Ala-D-Ala)](n+1)-di-trans,octa-cis-undecaprenyl diphosphate + di-trans,octa-cis-undecaprenyl diphosphate + H(+). It functions in the pathway cell wall biogenesis; peptidoglycan biosynthesis. Peptidoglycan polymerase that is essential for cell division. The sequence is that of Probable peptidoglycan glycosyltransferase FtsW from Riesia pediculicola (strain USDA).